The primary structure comprises 341 residues: Mitochondrial ubiquitin ligase activator of nfkb 1-A (341 aa).

The Cytoplasmic portion of the chain corresponds to 1–5; it reads MEDFP. Residues 6-26 form a helical membrane-spanning segment; sequence VLEMVCLGSSVALSGLFYYIY. Residues 27–233 lie on the Mitochondrial intermembrane side of the membrane; the sequence is RKKRKTVDKL…LLMEQEGQAE (207 aa). A helical transmembrane segment spans residues 234 to 254; it reads VWRVFACICALAGVAVLIWTG. Over 255–341 the chain is Cytoplasmic; sequence RRYYRQLKLR…IKRVVPLYQA (87 aa). The segment at 292 to 329 adopts an RING-type zinc-finger fold; sequence CVICLSNPRGCVLLDCGHVCCCFRCYQALPQPFCPICR.

In terms of assembly, homooligomer.

Its subcellular location is the mitochondrion outer membrane. The enzyme catalyses S-ubiquitinyl-[E2 ubiquitin-conjugating enzyme]-L-cysteine + [acceptor protein]-L-lysine = [E2 ubiquitin-conjugating enzyme]-L-cysteine + N(6)-ubiquitinyl-[acceptor protein]-L-lysine.. It participates in protein modification; protein ubiquitination. E3 ubiquitin-protein ligase that plays a role in the control of mitochondrial morphology. Promotes mitochondrial fragmentation and influences mitochondrial localization. Inhibits cell growth. E3 ubiquitin ligases accept ubiquitin from an E2 ubiquitin-conjugating enzyme in the form of a thioester and then directly transfer the ubiquitin to targeted substrates. The polypeptide is Mitochondrial ubiquitin ligase activator of nfkb 1-A (mul1a) (Danio rerio (Zebrafish)).